Reading from the N-terminus, the 391-residue chain is GTPase Obg (391 aa).

The 159-residue stretch at 1–159 (MKFIDEALIR…RDLLLELMLL (159 aa)) folds into the Obg domain. The OBG-type G domain maps to 160–333 (ADVGMLGLPN…LTRDIMDFIE (174 aa)). GTP-binding positions include 166–173 (GLPNAGKS), 191–195 (FTTLV), 213–216 (DIPG), 283–286 (NKID), and 314–316 (SAA). The Mg(2+) site is built by Ser173 and Thr193.

Belongs to the TRAFAC class OBG-HflX-like GTPase superfamily. OBG GTPase family. In terms of assembly, monomer. Requires Mg(2+) as cofactor.

It is found in the cytoplasm. In terms of biological role, an essential GTPase which binds GTP, GDP and possibly (p)ppGpp with moderate affinity, with high nucleotide exchange rates and a fairly low GTP hydrolysis rate. Plays a role in control of the cell cycle, stress response, ribosome biogenesis and in those bacteria that undergo differentiation, in morphogenesis control. The sequence is that of GTPase Obg from Haemophilus ducreyi (strain 35000HP / ATCC 700724).